The primary structure comprises 225 residues: Ribosome maturation factor RimM (225 aa).

Positions 144-225 (ADEFYWVDLI…RIVVDWEADY (82 aa)) constitute a PRC barrel domain.

It belongs to the RimM family. In terms of assembly, binds ribosomal protein uS19.

Its subcellular location is the cytoplasm. Its function is as follows. An accessory protein needed during the final step in the assembly of 30S ribosomal subunit, possibly for assembly of the head region. Essential for efficient processing of 16S rRNA. May be needed both before and after RbfA during the maturation of 16S rRNA. It has affinity for free ribosomal 30S subunits but not for 70S ribosomes. The polypeptide is Ribosome maturation factor RimM (Burkholderia vietnamiensis (strain G4 / LMG 22486) (Burkholderia cepacia (strain R1808))).